The primary structure comprises 170 residues: Acireductone dioxygenase (170 aa).

Positions 99, 101, 105, and 144 each coordinate Fe(2+). His99, His101, Glu105, and His144 together coordinate Ni(2+).

Belongs to the acireductone dioxygenase (ARD) family. In terms of assembly, monomer. Fe(2+) is required as a cofactor. Ni(2+) serves as cofactor.

The catalysed reaction is 1,2-dihydroxy-5-(methylsulfanyl)pent-1-en-3-one + O2 = 3-(methylsulfanyl)propanoate + CO + formate + 2 H(+). It carries out the reaction 1,2-dihydroxy-5-(methylsulfanyl)pent-1-en-3-one + O2 = 4-methylsulfanyl-2-oxobutanoate + formate + 2 H(+). Its pathway is amino-acid biosynthesis; L-methionine biosynthesis via salvage pathway; L-methionine from S-methyl-5-thio-alpha-D-ribose 1-phosphate: step 5/6. Catalyzes 2 different reactions between oxygen and the acireductone 1,2-dihydroxy-3-keto-5-methylthiopentene (DHK-MTPene) depending upon the metal bound in the active site. Fe-containing acireductone dioxygenase (Fe-ARD) produces formate and 2-keto-4-methylthiobutyrate (KMTB), the alpha-ketoacid precursor of methionine in the methionine recycle pathway. Ni-containing acireductone dioxygenase (Ni-ARD) produces methylthiopropionate, carbon monoxide and formate, and does not lie on the methionine recycle pathway. The polypeptide is Acireductone dioxygenase (Bacillus anthracis).